A 302-amino-acid chain; its full sequence is Stanniocalcin-2 (302 aa).

A signal peptide spans 1–24 (MCAERLGHFMTLALVLATIDPARG). Positions 23 to 44 (RGTDATNPPEGPQDRSSQQKGR) are disordered. N73 carries N-linked (GlcNAc...) asparagine glycosylation. The interval 218–302 (PPTAPPERQP…EQSEYSDIRR (85 aa)) is disordered. Residues 227 to 264 (PQVDRAKLSRAHHGEAGHHLPEPSSRETGRGAKGERGS) are compositionally biased toward basic and acidic residues. Phosphoserine is present on residues S250 and S251. Phosphothreonine is present on T254.

This sequence belongs to the stanniocalcin family. As to quaternary structure, homodimer; disulfide-linked.

The protein localises to the secreted. Functionally, has an anti-hypocalcemic action on calcium and phosphate homeostasis. This Macaca nemestrina (Pig-tailed macaque) protein is Stanniocalcin-2 (STC2).